A 186-amino-acid polypeptide reads, in one-letter code: Ribosome-recycling factor (186 aa).

The protein belongs to the RRF family.

The protein localises to the cytoplasm. Responsible for the release of ribosomes from messenger RNA at the termination of protein biosynthesis. May increase the efficiency of translation by recycling ribosomes from one round of translation to another. The chain is Ribosome-recycling factor from Polynucleobacter asymbioticus (strain DSM 18221 / CIP 109841 / QLW-P1DMWA-1) (Polynucleobacter necessarius subsp. asymbioticus).